A 298-amino-acid chain; its full sequence is MAKKEEHVRKPDWLKIKLNTNENYTGLKKMMRENNLNTVCEEAKCPNIHECWAVRRTATFMILGSVCTRACRFCAVKTGLPTELDLQEPERVADSVALMNLKHAVITAVARDDQKDGGAGVFAETVRAIRRKSPFTTIEVLPSDMGGNYDNLKTLMDTRPDILNHNIETVRRLTPRVRARATYDRSLEFLRRAKEMQPDIPTKSSIMIGLGETKEEIIEVMDDLLANNVDIMAIGQYLQPSKKHLKVQKYYHPDEFAELKEIAMAKGFSHCEAGPLVRSSYHADEQVNEASKKRQAQA.

7 residues coordinate [4Fe-4S] cluster: cysteine 40, cysteine 45, cysteine 51, cysteine 67, cysteine 71, cysteine 74, and serine 280. Residues 53–269 (AVRRTATFMI…KEIAMAKGFS (217 aa)) enclose the Radical SAM core domain.

The protein belongs to the radical SAM superfamily. Lipoyl synthase family. The cofactor is [4Fe-4S] cluster.

It localises to the cytoplasm. It catalyses the reaction [[Fe-S] cluster scaffold protein carrying a second [4Fe-4S](2+) cluster] + N(6)-octanoyl-L-lysyl-[protein] + 2 oxidized [2Fe-2S]-[ferredoxin] + 2 S-adenosyl-L-methionine + 4 H(+) = [[Fe-S] cluster scaffold protein] + N(6)-[(R)-dihydrolipoyl]-L-lysyl-[protein] + 4 Fe(3+) + 2 hydrogen sulfide + 2 5'-deoxyadenosine + 2 L-methionine + 2 reduced [2Fe-2S]-[ferredoxin]. It functions in the pathway protein modification; protein lipoylation via endogenous pathway; protein N(6)-(lipoyl)lysine from octanoyl-[acyl-carrier-protein]. Its function is as follows. Catalyzes the radical-mediated insertion of two sulfur atoms into the C-6 and C-8 positions of the octanoyl moiety bound to the lipoyl domains of lipoate-dependent enzymes, thereby converting the octanoylated domains into lipoylated derivatives. The sequence is that of Lipoyl synthase from Bacillus pumilus (strain SAFR-032).